Reading from the N-terminus, the 147-residue chain is Peptidyl-lysine N-acetyltransferase YjaB (147 aa).

The region spanning 3–144 is the N-acetyltransferase domain; the sequence is ISIRRSRHEE…KPYPLLNLAY (142 aa).

It belongs to the acetyltransferase family.

The enzyme catalyses L-lysyl-[protein] + acetyl-CoA = N(6)-acetyl-L-lysyl-[protein] + CoA + H(+). Functionally, N-epsilon-lysine acetyltransferase that catalyzes acetylation of a large number of proteins. Binds acetyl-CoA. This Escherichia coli (strain K12) protein is Peptidyl-lysine N-acetyltransferase YjaB (yjaB).